The sequence spans 291 residues: Diaminopimelate epimerase (291 aa).

Residues Asn-13, Gln-46, and Asn-66 each contribute to the substrate site. Cys-75 acts as the Proton donor in catalysis. Residues 76-77, Asn-170, Asn-203, and 221-222 each bind substrate; these read GN and ER. Catalysis depends on Cys-230, which acts as the Proton acceptor. 231 to 232 contributes to the substrate binding site; the sequence is GS.

This sequence belongs to the diaminopimelate epimerase family. Homodimer.

The protein localises to the cytoplasm. The enzyme catalyses (2S,6S)-2,6-diaminopimelate = meso-2,6-diaminopimelate. Its pathway is amino-acid biosynthesis; L-lysine biosynthesis via DAP pathway; DL-2,6-diaminopimelate from LL-2,6-diaminopimelate: step 1/1. In terms of biological role, catalyzes the stereoinversion of LL-2,6-diaminopimelate (L,L-DAP) to meso-diaminopimelate (meso-DAP), a precursor of L-lysine and an essential component of the bacterial peptidoglycan. The sequence is that of Diaminopimelate epimerase from Albidiferax ferrireducens (strain ATCC BAA-621 / DSM 15236 / T118) (Rhodoferax ferrireducens).